A 184-amino-acid polypeptide reads, in one-letter code: MTNVTDQQLELIKKSIQFVPNYPKKGILFRDITELLKNPQAYSASITLLAYYYRNHKLTKVVGIEARGFLFSAPLALILKLGFIPARKSGRLPRDTIREPYILEYDNGFLEIHTDSITPGDQVLIIDDLLATGGTIAAAVKLIRRLGGEVNHAGFIIDLENLGGKSLLKEIGINSYSLVTFSNH.

The protein belongs to the purine/pyrimidine phosphoribosyltransferase family. As to quaternary structure, homodimer.

Its subcellular location is the cytoplasm. It catalyses the reaction AMP + diphosphate = 5-phospho-alpha-D-ribose 1-diphosphate + adenine. It participates in purine metabolism; AMP biosynthesis via salvage pathway; AMP from adenine: step 1/1. Its function is as follows. Catalyzes a salvage reaction resulting in the formation of AMP, that is energically less costly than de novo synthesis. The chain is Adenine phosphoribosyltransferase from Blochmanniella pennsylvanica (strain BPEN).